The primary structure comprises 502 residues: Probable cytosol aminopeptidase (502 aa).

Positions 254 and 259 each coordinate Mn(2+). K266 is a catalytic residue. Residues D277, D336, and E338 each contribute to the Mn(2+) site. Residue R340 is part of the active site.

It belongs to the peptidase M17 family. Requires Mn(2+) as cofactor.

The protein localises to the cytoplasm. It catalyses the reaction Release of an N-terminal amino acid, Xaa-|-Yaa-, in which Xaa is preferably Leu, but may be other amino acids including Pro although not Arg or Lys, and Yaa may be Pro. Amino acid amides and methyl esters are also readily hydrolyzed, but rates on arylamides are exceedingly low.. It carries out the reaction Release of an N-terminal amino acid, preferentially leucine, but not glutamic or aspartic acids.. Functionally, presumably involved in the processing and regular turnover of intracellular proteins. Catalyzes the removal of unsubstituted N-terminal amino acids from various peptides. This is Probable cytosol aminopeptidase from Tropheryma whipplei (strain TW08/27) (Whipple's bacillus).